The chain runs to 263 residues: Glucosamine-6-phosphate deaminase 2 (263 aa).

The Proton acceptor; for enolization step role is filled by aspartate 82. Catalysis depends on asparagine 151, which acts as the For ring-opening step. Histidine 153 functions as the Proton acceptor; for ring-opening step in the catalytic mechanism. Catalysis depends on glutamate 158, which acts as the For ring-opening step.

It belongs to the glucosamine/galactosamine-6-phosphate isomerase family. Homohexamer.

The catalysed reaction is alpha-D-glucosamine 6-phosphate + H2O = beta-D-fructose 6-phosphate + NH4(+). Its function is as follows. Catalyzes the reversible conversion of alpha-D-glucosamine 6-phosphate (GlcN-6P) into beta-D-fructose 6-phosphate (Fru-6P) and ammonium ion, a regulatory reaction step in de novo uridine diphosphate-N-acetyl-alpha-D-glucosamine (UDP-GlcNAc) biosynthesis via hexosamine pathway. The chain is Glucosamine-6-phosphate deaminase 2 (GPI2) from Giardia intestinalis (Giardia lamblia).